A 213-amino-acid chain; its full sequence is Putative glutathione-dependent formaldehyde-activating enzyme (213 aa).

A CENP-V/GFA domain is found at 19–165 (FPGGTLKCLC…FRELGLETYD (147 aa)). Residues cysteine 26, cysteine 28, cysteine 47, cysteine 49, cysteine 52, cysteine 94, and cysteine 97 each coordinate Zn(2+).

This sequence belongs to the Gfa family. The cofactor is Zn(2+).

The enzyme catalyses S-(hydroxymethyl)glutathione = glutathione + formaldehyde. It participates in one-carbon metabolism; formaldehyde degradation; formate from formaldehyde (glutathione route): step 1/3. Its function is as follows. Catalyzes the condensation of formaldehyde and glutathione to S-hydroxymethylglutathione. This chain is Putative glutathione-dependent formaldehyde-activating enzyme, found in Podospora anserina (strain S / ATCC MYA-4624 / DSM 980 / FGSC 10383) (Pleurage anserina).